The following is a 376-amino-acid chain: MKIVVDENMPYVEPLFGDLGEIIPVNGRTLTPEQVQDADVLLVRSVTRVNAALLEANQKLKFVGSATIGTDHVDLAYLATRGIVFSNAPGCNATAVGEFAFIAMLELAARFNSPLRGKVVGIVGAGNTGSATAKCLEAFGIKVLLNDPIKEAEGDPRDFVSLETLLQEADIISLHVPITRTGEHKTLHLFDEARLMSLKANIWLINCCRGDVIDNQALIKVKQQRDDLKLVLDVWEGEPNPMPELVPFAEFATPHIAGYSLEGKARGTFMLYQKLCELLAIPATKGLSDLLPRFNIKAVELEQLPDEKALLQLARFVYDLRDDDAVFRNCFAKENGFDIMRKNHKHRREFSALALAYRGQSEVDWLSNLGFSGVGR.

Residues S45 and T67 each contribute to the substrate site. NAD(+) is bound at residue D147. The active site involves R209. An NAD(+)-binding site is contributed by D233. E238 is an active-site residue. Catalysis depends on H255, which acts as the Proton donor. NAD(+) is bound at residue G258. Y259 is a binding site for substrate.

Belongs to the D-isomer specific 2-hydroxyacid dehydrogenase family. PdxB subfamily. In terms of assembly, homodimer.

The protein localises to the cytoplasm. It carries out the reaction 4-phospho-D-erythronate + NAD(+) = (R)-3-hydroxy-2-oxo-4-phosphooxybutanoate + NADH + H(+). Its pathway is cofactor biosynthesis; pyridoxine 5'-phosphate biosynthesis; pyridoxine 5'-phosphate from D-erythrose 4-phosphate: step 2/5. In terms of biological role, catalyzes the oxidation of erythronate-4-phosphate to 3-hydroxy-2-oxo-4-phosphonooxybutanoate. The sequence is that of Erythronate-4-phosphate dehydrogenase from Shewanella oneidensis (strain ATCC 700550 / JCM 31522 / CIP 106686 / LMG 19005 / NCIMB 14063 / MR-1).